A 214-amino-acid polypeptide reads, in one-letter code: External core antigen (214 aa).

The first 19 residues, 1 to 19 (MQLFHLCLIISCTCPTLQA), serve as a signal peptide directing secretion. The HBEAG stretch occupies residues 25 to 27 (GWL). Positions 164 to 214 (PNAPILSTLPETTVVRRRDRGRSPRRRTPSPRRRRSQSPRRRRSQSRESQC) are disordered. A compositionally biased stretch (basic residues) spans 178–207 (VRRRDRGRSPRRRTPSPRRRRSQSPRRRRS). The stretch at 186–192 (SPRRRTP) is one 1; half-length repeat. The segment at 186–208 (SPRRRTPSPRRRRSQSPRRRRSQ) is 3 X 8 AA repeats of S-P-R-R-R-R-S-Q. Residues 186-214 (SPRRRTPSPRRRRSQSPRRRRSQSRESQC) constitute a propeptide that is removed on maturation. A run of 2 repeats spans residues 193-200 (SPRRRRSQ) and 201-208 (SPRRRRSQ).

This sequence belongs to the orthohepadnavirus precore antigen family. In terms of assembly, homodimerizes. Post-translationally, phosphorylated. Cleaved by host furin.

The protein resides in the secreted. It is found in the host nucleus. Functionally, may regulate immune response to the intracellular capsid in acting as a T-cell tolerogen, by having an immunoregulatory effect which prevents destruction of infected cells by cytotoxic T-cells. This immune regulation may predispose to chronicity during perinatal infections and prevent severe liver injury during adult infections. This chain is External core antigen, found in Homo sapiens (Human).